The chain runs to 250 residues: Cell division protein ZapD (250 aa).

Belongs to the ZapD family. In terms of assembly, interacts with FtsZ.

It localises to the cytoplasm. In terms of biological role, cell division factor that enhances FtsZ-ring assembly. Directly interacts with FtsZ and promotes bundling of FtsZ protofilaments, with a reduction in FtsZ GTPase activity. The sequence is that of Cell division protein ZapD from Pectobacterium carotovorum subsp. carotovorum (strain PC1).